The sequence spans 330 residues: ADP-L-glycero-D-manno-heptose-6-epimerase (330 aa).

NADP(+) contacts are provided by residues 11-12 (FI), 32-33 (DN), Lys-39, Lys-54, 75-79 (EGACS), and Asn-92. The active-site Proton acceptor is Tyr-139. Lys-143 contributes to the NADP(+) binding site. Asn-168 serves as a coordination point for substrate. Residues Val-169 and Lys-177 each contribute to the NADP(+) site. The active-site Proton acceptor is Lys-177. Residues Arg-179, His-186, 200–203 (FGEY), Arg-213, and Tyr-292 contribute to the substrate site.

This sequence belongs to the NAD(P)-dependent epimerase/dehydratase family. HldD subfamily. Homopentamer. Requires NADP(+) as cofactor.

The catalysed reaction is ADP-D-glycero-beta-D-manno-heptose = ADP-L-glycero-beta-D-manno-heptose. It functions in the pathway nucleotide-sugar biosynthesis; ADP-L-glycero-beta-D-manno-heptose biosynthesis; ADP-L-glycero-beta-D-manno-heptose from D-glycero-beta-D-manno-heptose 7-phosphate: step 4/4. In terms of biological role, catalyzes the interconversion between ADP-D-glycero-beta-D-manno-heptose and ADP-L-glycero-beta-D-manno-heptose via an epimerization at carbon 6 of the heptose. This is ADP-L-glycero-D-manno-heptose-6-epimerase from Burkholderia cenocepacia (strain HI2424).